The chain runs to 243 residues: Ubiquinone/menaquinone biosynthesis C-methyltransferase UbiE (243 aa).

S-adenosyl-L-methionine is bound by residues Thr69, Asp90, and 116 to 117 (DA).

This sequence belongs to the class I-like SAM-binding methyltransferase superfamily. MenG/UbiE family.

It catalyses the reaction a 2-demethylmenaquinol + S-adenosyl-L-methionine = a menaquinol + S-adenosyl-L-homocysteine + H(+). The catalysed reaction is a 2-methoxy-6-(all-trans-polyprenyl)benzene-1,4-diol + S-adenosyl-L-methionine = a 5-methoxy-2-methyl-3-(all-trans-polyprenyl)benzene-1,4-diol + S-adenosyl-L-homocysteine + H(+). Its pathway is quinol/quinone metabolism; menaquinone biosynthesis; menaquinol from 1,4-dihydroxy-2-naphthoate: step 2/2. It participates in cofactor biosynthesis; ubiquinone biosynthesis. Methyltransferase required for the conversion of demethylmenaquinol (DMKH2) to menaquinol (MKH2) and the conversion of 2-polyprenyl-6-methoxy-1,4-benzoquinol (DDMQH2) to 2-polyprenyl-3-methyl-6-methoxy-1,4-benzoquinol (DMQH2). This Cupriavidus pinatubonensis (strain JMP 134 / LMG 1197) (Cupriavidus necator (strain JMP 134)) protein is Ubiquinone/menaquinone biosynthesis C-methyltransferase UbiE.